A 246-amino-acid chain; its full sequence is Probable transcriptional regulatory protein HAPS_0943 (246 aa).

It belongs to the TACO1 family.

The protein resides in the cytoplasm. The protein is Probable transcriptional regulatory protein HAPS_0943 of Glaesserella parasuis serovar 5 (strain SH0165) (Haemophilus parasuis).